A 468-amino-acid polypeptide reads, in one-letter code: Glutamate--tRNA ligase (468 aa).

The 'HIGH' region signature appears at 10–20 (PSPTGDLHIGG). The Zn(2+) site is built by Cys-99, Cys-101, Cys-126, and Asp-128. A 'KMSKS' region motif is present at residues 236-240 (RLSKR). Residue Lys-239 participates in ATP binding.

The protein belongs to the class-I aminoacyl-tRNA synthetase family. Glutamate--tRNA ligase type 1 subfamily. In terms of assembly, monomer. It depends on Zn(2+) as a cofactor.

The protein resides in the cytoplasm. The catalysed reaction is tRNA(Glu) + L-glutamate + ATP = L-glutamyl-tRNA(Glu) + AMP + diphosphate. Catalyzes the attachment of glutamate to tRNA(Glu) in a two-step reaction: glutamate is first activated by ATP to form Glu-AMP and then transferred to the acceptor end of tRNA(Glu). The protein is Glutamate--tRNA ligase of Syntrophobacter fumaroxidans (strain DSM 10017 / MPOB).